The sequence spans 177 residues: Ribosome maturation factor RimP (177 aa).

Positions 153 to 171 (VEFNRKDTKNDNQTEHDNK) are enriched in basic and acidic residues. The disordered stretch occupies residues 153–177 (VEFNRKDTKNDNQTEHDNKTEEEEA).

The protein belongs to the RimP family.

Its subcellular location is the cytoplasm. In terms of biological role, required for maturation of 30S ribosomal subunits. The sequence is that of Ribosome maturation factor RimP from Streptomyces coelicolor (strain ATCC BAA-471 / A3(2) / M145).